Here is a 539-residue protein sequence, read N- to C-terminus: Carboxysome assembly protein CcmM (539 aa).

The carbonic anhydrase-like domain stretch occupies residues 1-214 (MPSPTTVPVA…PLRPSSSEAT (214 aa)). The tract at residues 194–213 (TADFHSTPTPSPLRPSSSEA) is disordered. A RbcS-like repeat 1, SSUL1 repeat occupies 226-397 (SSEVITQVRS…VLAELENCLS (172 aa)). 2 disulfide bridges follow: C261/C279 and C377/C395. The RbcS-like repeat 2, SSUL2 repeat unit spans residues 341 to 425 (LSAEVVNKVR…RVFEALIQDP (85 aa)). Residues 427-459 (GPVGSAKAAAAPVSSATPSSHSYTSNGSSSSDV) form a disordered region. Positions 431–457 (SAKAAAAPVSSATPSSHSYTSNGSSSS) are enriched in low complexity. The RbcS-like repeat 3, SSUL3 repeat unit spans residues 453–539 (GSSSSDVAGQ…RVAELLIQKP (87 aa)).

This sequence belongs to the gamma-class carbonic anhydrase family. Probably a homotrimer. Purifies from carboxysomes in complex with both RuBisCO subunits and carbonic anhydrase (ccaA); the complex is probably associated with the carboxysome shell. Interacts with CcmN. Binds holo-RuBisCO (RbcL(8)-RbcS(8)) via its SSUL domains; the SSUL domain binds close to the equitorial domain of RuBisCO between RbcL dimers, with 1 M35 protein per dimer. In terms of assembly, the short form purifies from carboxysomes in complex with both RuBisCO subunits; the complex is probably associated with the carboxysome shell. Identified as 2 proteins of 58 and 38 kDa by mass spectrometry, called M58 and M35, the shorter protein is translated starting at Val-216. Protease inhibitors do not alter the appearance of M35. In isolated carboxysomes M35 is 4-5 fold more abundant. The first amino acid (equivalent to Val-216) is not seen in Edman degradation, while Tyr-219 and Gln-222 may be post-translationally modified.

Its subcellular location is the carboxysome. Its function is as follows. Functions as a scaffold protein for the assembly of beta-carboxysomes, initiates carboxysome assembly by coalescing RuBisCO (ribulose bisphosphate carboxylase, rbcL-rbcS). Produced as a full-length (M58) and a shorter form (M35); both forms are required for correct carboxysome assembly and growth. The short form is more abundant. Despite its strong similarity to gamma-class carbonic anhydrase (CA) it does not have detectable CA activity. Functionally, the M35 isoform is able to condense RuBisCO into a liquid matrix; the presence of disulfide bonds in M35 reduces affinity for RuBisCO, while mutating all 4 Cys to Ser causes a 4-fold increase in doubling time, more than 15% increase in CO(2) requirement, and abnormal carboxysomes. Beta-carboxysome assembly initiates when soluble RuBisCO is condensed into a liquid matrix in a pre-carboxysome by the RbcS-like domains of probably both CcmM58 and CcmM35. CcmN interacts with the N-terminus of CcmM58, and then recruits the CcmK2 major shell protein plus other less abundant CcmK proteins via CcmN's encapsulation peptide. Shell formation requires CcmK proteins and CcmO. CcmL caps the otherwise elongated carboxysome. Once fully encapsulated carboxysomes are formed, they migrate within the cell probably via interactions with the cytoskeleton. This Synechococcus elongatus (strain ATCC 33912 / PCC 7942 / FACHB-805) (Anacystis nidulans R2) protein is Carboxysome assembly protein CcmM.